A 132-amino-acid chain; its full sequence is NAD(P) transhydrogenase subunit alpha part 2 (132 aa).

A run of 3 helical transmembrane segments spans residues 43–63 (PLVFAITIFVLASFVGYYVVW), 72–92 (PLMSITNAISGIIVISSMIAI), and 103–123 (LLGSFATLLASINIFGGFIVT).

As to quaternary structure, complex of an alpha and a beta chain; in Rickettsia, the alpha chain seems to be made of two subunits.

The protein resides in the cell inner membrane. The catalysed reaction is NAD(+) + NADPH + H(+)(in) = NADH + NADP(+) + H(+)(out). The transhydrogenation between NADH and NADP is coupled to respiration and ATP hydrolysis and functions as a proton pump across the membrane. The protein is NAD(P) transhydrogenase subunit alpha part 2 (pntAB) of Rickettsia prowazekii (strain Madrid E).